The following is a 412-amino-acid chain: Serine hydroxymethyltransferase (412 aa).

(6S)-5,6,7,8-tetrahydrofolate-binding positions include Leu114 and 118–120; that span reads GHL. Position 223 is an N6-(pyridoxal phosphate)lysine (Lys223).

The protein belongs to the SHMT family. In terms of assembly, homodimer. It depends on pyridoxal 5'-phosphate as a cofactor.

It is found in the cytoplasm. The catalysed reaction is (6R)-5,10-methylene-5,6,7,8-tetrahydrofolate + glycine + H2O = (6S)-5,6,7,8-tetrahydrofolate + L-serine. The protein operates within one-carbon metabolism; tetrahydrofolate interconversion. Its pathway is amino-acid biosynthesis; glycine biosynthesis; glycine from L-serine: step 1/1. Functionally, catalyzes the reversible interconversion of serine and glycine with tetrahydrofolate (THF) serving as the one-carbon carrier. This reaction serves as the major source of one-carbon groups required for the biosynthesis of purines, thymidylate, methionine, and other important biomolecules. Also exhibits THF-independent aldolase activity toward beta-hydroxyamino acids, producing glycine and aldehydes, via a retro-aldol mechanism. The polypeptide is Serine hydroxymethyltransferase (Mesoplasma florum (strain ATCC 33453 / NBRC 100688 / NCTC 11704 / L1) (Acholeplasma florum)).